The chain runs to 308 residues: Porphobilinogen deaminase (308 aa).

The residue at position 242 (cysteine 242) is an S-(dipyrrolylmethanemethyl)cysteine.

It belongs to the HMBS family. As to quaternary structure, monomer. Requires dipyrromethane as cofactor.

The catalysed reaction is 4 porphobilinogen + H2O = hydroxymethylbilane + 4 NH4(+). The protein operates within porphyrin-containing compound metabolism; protoporphyrin-IX biosynthesis; coproporphyrinogen-III from 5-aminolevulinate: step 2/4. In terms of biological role, tetrapolymerization of the monopyrrole PBG into the hydroxymethylbilane pre-uroporphyrinogen in several discrete steps. The chain is Porphobilinogen deaminase from Alkalilimnicola ehrlichii (strain ATCC BAA-1101 / DSM 17681 / MLHE-1).